A 464-amino-acid chain; its full sequence is MTVKTRFAPSPTGYLHIGGVRTALFSWAFARHHKGEFLLRIEDTDLARSTAESVNIILDGMKWVGLDYDNADNVVYQTRRFDRYKEVIAELLAKGDAYYCYCSKEELEAMREKAEKEGTATYDRRWRPEAGKTLPEIPAGVQPVVRFKTPLDGVTKWTDLVKGEISIPNEALDDLIIARADGTPTYNFCAVVDDYDMGVTHIIRGDDHVNNTPKQINILKAIGANLPEYGHLPMILNEQGKKISKRSGDTVAITDFGAMGILPEAMLNYLARLGWAHGDDEFFTTEQFIEWFDLKDVSPSPSRMDLKKLYWINGEHIKITPDGKLTELVKPRLALRDIHETEKPALEDVLALVKDRAQDLNALADECLYFYKKQVPAEADVAKHWDDEAAARMLRFAERLEGLEDWNAKAIHDLFKPFCDEEGIKMGKLGMPLRLAVCGTAKTPSVDAVLALISKEKVLKRIRA.

The 'HIGH' region motif lies at proline 9–glycine 19. Positions lysine 242–arginine 246 match the 'KMSKS' region motif. Lysine 245 contributes to the ATP binding site.

Belongs to the class-I aminoacyl-tRNA synthetase family. Glutamate--tRNA ligase type 1 subfamily. Monomer.

The protein resides in the cytoplasm. It carries out the reaction tRNA(Glu) + L-glutamate + ATP = L-glutamyl-tRNA(Glu) + AMP + diphosphate. Functionally, catalyzes the attachment of glutamate to tRNA(Glu) in a two-step reaction: glutamate is first activated by ATP to form Glu-AMP and then transferred to the acceptor end of tRNA(Glu). The protein is Glutamate--tRNA ligase of Neisseria gonorrhoeae (strain ATCC 700825 / FA 1090).